The following is a 314-amino-acid chain: tRNA(Ile)-lysidine synthase, chloroplastic (314 aa).

31 to 36 (SGGQDS) is an ATP binding site.

It belongs to the tRNA(Ile)-lysidine synthase family.

The protein localises to the plastid. Its subcellular location is the chloroplast. It catalyses the reaction cytidine(34) in tRNA(Ile2) + L-lysine + ATP = lysidine(34) in tRNA(Ile2) + AMP + diphosphate + H(+). In terms of biological role, ligates lysine onto the cytidine present at position 34 of the AUA codon-specific tRNA(Ile) that contains the anticodon CAU, in an ATP-dependent manner. Cytidine is converted to lysidine, thus changing the amino acid specificity of the tRNA from methionine to isoleucine. The protein is tRNA(Ile)-lysidine synthase, chloroplastic of Cyanidium caldarium (Red alga).